The sequence spans 466 residues: Ribulose bisphosphate carboxylase large chain (466 aa).

The residue at position 4 (Lys-4) is an N6,N6,N6-trimethyllysine. Substrate contacts are provided by Asn-113 and Thr-163. Lys-165 acts as the Proton acceptor in catalysis. Lys-167 lines the substrate pocket. Positions 191, 193, and 194 each coordinate Mg(2+). N6-carboxylysine is present on Lys-191. Residue His-284 is the Proton acceptor of the active site. Residues Arg-285, His-317, and Ser-369 each contribute to the substrate site.

This sequence belongs to the RuBisCO large chain family. Type I subfamily. In terms of assembly, heterohexadecamer of 8 large chains and 8 small chains; disulfide-linked. The disulfide link is formed within the large subunit homodimers. The cofactor is Mg(2+). In terms of processing, the disulfide bond which can form in the large chain dimeric partners within the hexadecamer appears to be associated with oxidative stress and protein turnover.

The protein localises to the plastid. Its subcellular location is the chloroplast. It catalyses the reaction 2 (2R)-3-phosphoglycerate + 2 H(+) = D-ribulose 1,5-bisphosphate + CO2 + H2O. The enzyme catalyses D-ribulose 1,5-bisphosphate + O2 = 2-phosphoglycolate + (2R)-3-phosphoglycerate + 2 H(+). RuBisCO catalyzes two reactions: the carboxylation of D-ribulose 1,5-bisphosphate, the primary event in carbon dioxide fixation, as well as the oxidative fragmentation of the pentose substrate in the photorespiration process. Both reactions occur simultaneously and in competition at the same active site. This chain is Ribulose bisphosphate carboxylase large chain, found in Drimys winteri (Winter's bark).